Here is a 171-residue protein sequence, read N- to C-terminus: MENFYKVGTIVNTQGLQGEVRVLPSTDFANERFSKGAVLALFDDKDNYIQDLKVKSGRLQKNFYVVKFEGFYHINDVEKYKGYVVKIAQENQEELNDGEFYYHEIIGSDVYENDILIGQISEILQPGANDVWVVKRKGKRDLLLPYIPPVVLKVDVAQHRVDVDIMEGLDD.

The 73-residue stretch at D97 to L169 folds into the PRC barrel domain.

Belongs to the RimM family. As to quaternary structure, binds ribosomal protein uS19.

The protein localises to the cytoplasm. Functionally, an accessory protein needed during the final step in the assembly of 30S ribosomal subunit, possibly for assembly of the head region. Essential for efficient processing of 16S rRNA. May be needed both before and after RbfA during the maturation of 16S rRNA. It has affinity for free ribosomal 30S subunits but not for 70S ribosomes. The protein is Ribosome maturation factor RimM of Lactococcus lactis subsp. cremoris (strain SK11).